A 270-amino-acid chain; its full sequence is Glutamate 5-kinase (270 aa).

K18 serves as a coordination point for ATP. Substrate contacts are provided by S54, D141, and N153. 173 to 174 serves as a coordination point for ATP; that stretch reads SD.

Belongs to the glutamate 5-kinase family.

It localises to the cytoplasm. The enzyme catalyses L-glutamate + ATP = L-glutamyl 5-phosphate + ADP. The protein operates within amino-acid biosynthesis; L-proline biosynthesis; L-glutamate 5-semialdehyde from L-glutamate: step 1/2. Functionally, catalyzes the transfer of a phosphate group to glutamate to form L-glutamate 5-phosphate. In Leifsonia xyli subsp. xyli (strain CTCB07), this protein is Glutamate 5-kinase.